Here is a 294-residue protein sequence, read N- to C-terminus: MPSTPTLIFIVIFFLVSVASMLQNGFMIIVLGREWMRNRALPAVDMIVASLASSRFCLHGIAILNNFLASFDFCYQANFVGILWDFINTLILWLTAWLAIFYCVKISSFSHPVLFWLKWRISQLVPRLLLVSLIMGGLSAIISATGNIIANQMIISQGFHGNCTFGHMSLDFYRYYYLSHAVLMWFTPFFLFLVSIIFLMFSLYRHVEKMRGHRPGPWDPRTQAHTMALKSLTVFITFYILFFLALIISSTKSKTMHSYWYWVREIIIYTGIFLNSIILVLSNPKLRKALKMRF.

Residues 1–7 lie on the Extracellular side of the membrane; the sequence is MPSTPTL. The helical transmembrane segment at 8–28 threads the bilayer; sequence IFIVIFFLVSVASMLQNGFMI. Topologically, residues 29-43 are cytoplasmic; it reads IVLGREWMRNRALPA. Residues 44-64 form a helical membrane-spanning segment; that stretch reads VDMIVASLASSRFCLHGIAIL. The Extracellular portion of the chain corresponds to 65–80; the sequence is NNFLASFDFCYQANFV. The helical transmembrane segment at 81–101 threads the bilayer; sequence GILWDFINTLILWLTAWLAIF. The Cytoplasmic portion of the chain corresponds to 102-128; the sequence is YCVKISSFSHPVLFWLKWRISQLVPRL. A helical transmembrane segment spans residues 129-149; that stretch reads LLVSLIMGGLSAIISATGNII. Topologically, residues 150-180 are extracellular; it reads ANQMIISQGFHGNCTFGHMSLDFYRYYYLSH. The N-linked (GlcNAc...) asparagine glycan is linked to asparagine 162. A helical transmembrane segment spans residues 181-201; it reads AVLMWFTPFFLFLVSIIFLMF. The Cytoplasmic segment spans residues 202–227; it reads SLYRHVEKMRGHRPGPWDPRTQAHTM. The helical transmembrane segment at 228–248 threads the bilayer; it reads ALKSLTVFITFYILFFLALII. Residues 249–260 lie on the Extracellular side of the membrane; it reads SSTKSKTMHSYW. The chain crosses the membrane as a helical span at residues 261–281; the sequence is YWVREIIIYTGIFLNSIILVL. At 282–294 the chain is on the cytoplasmic side; the sequence is SNPKLRKALKMRF.

Belongs to the G-protein coupled receptor T2R family.

It localises to the membrane. Functionally, putative taste receptor which may play a role in the perception of bitterness. The polypeptide is Taste receptor type 2 member 143 (Rattus norvegicus (Rat)).